The chain runs to 239 residues: Purine nucleoside phosphorylase DeoD-type (239 aa).

A purine D-ribonucleoside is bound at residue His-5. Phosphate is bound by residues Gly-21, Arg-25, Arg-44, and 88 to 91 (RVGS). A purine D-ribonucleoside contacts are provided by residues 180–182 (EME) and 204–205 (SD). The active-site Proton donor is Asp-205.

Belongs to the PNP/UDP phosphorylase family. Homohexamer; trimer of homodimers.

The enzyme catalyses a purine D-ribonucleoside + phosphate = a purine nucleobase + alpha-D-ribose 1-phosphate. It carries out the reaction a purine 2'-deoxy-D-ribonucleoside + phosphate = a purine nucleobase + 2-deoxy-alpha-D-ribose 1-phosphate. Functionally, catalyzes the reversible phosphorolytic breakdown of the N-glycosidic bond in the beta-(deoxy)ribonucleoside molecules, with the formation of the corresponding free purine bases and pentose-1-phosphate. The sequence is that of Purine nucleoside phosphorylase DeoD-type from Erwinia tasmaniensis (strain DSM 17950 / CFBP 7177 / CIP 109463 / NCPPB 4357 / Et1/99).